Consider the following 174-residue polypeptide: Cytoglobin-1 (174 aa).

Residues Ser-15 to Ala-165 enclose the Globin domain. Residues His-78 and His-110 each contribute to the heme b site.

Belongs to the globin family. As to quaternary structure, monomeric. In terms of tissue distribution, expressed in all tissues examined with highest levels in brain, eye, gut and heart.

It localises to the cytoplasm. It is found in the nucleus. The enzyme catalyses Fe(II)-heme b-[protein] + nitric oxide + O2 = Fe(III)-heme b-[protein] + nitrate. The catalysed reaction is Fe(III)-heme b-[protein] + nitric oxide + H2O = Fe(II)-heme b-[protein] + nitrite + 2 H(+). It catalyses the reaction 2 superoxide + 2 H(+) = H2O2 + O2. It carries out the reaction H2O2 + AH2 = A + 2 H2O. Probable multifunctional globin with a hexacoordinated heme iron required for the catalysis of various reactions depending on redox condition of the cell as well as oxygen availability. Has a nitric oxide dioxygenase (NOD) activity and is most probably involved in cell-mediated and oxygen-dependent nitric oxide consumption. Under normoxic conditions functions as a nitric oxide dioxygenase (NOD) but under hypoxic conditions the globin may switch its function to that of a nitrite (NO2) reductase (NiR), generating nitric oxide. Could also have peroxidase and superoxide dismutase activities, detoxifying reactive oxygen species and protecting cells against oxidative stress. Also binds dioxygen with low affinity and could function as an oxygen sensor but has probably no function as a respiratory oxygen carrier. The chain is Cytoglobin-1 (cygb1) from Danio rerio (Zebrafish).